Here is a 207-residue protein sequence, read N- to C-terminus: Ribonuclease HII (207 aa).

The RNase H type-2 domain occupies 20 to 207 (QLFAGVDEVG…KPVKRVLGIE (188 aa)). 3 residues coordinate a divalent metal cation: aspartate 26, glutamate 27, and aspartate 118.

The protein belongs to the RNase HII family. The cofactor is Mn(2+). Mg(2+) is required as a cofactor.

It localises to the cytoplasm. It carries out the reaction Endonucleolytic cleavage to 5'-phosphomonoester.. In terms of biological role, endonuclease that specifically degrades the RNA of RNA-DNA hybrids. This Aliivibrio fischeri (strain ATCC 700601 / ES114) (Vibrio fischeri) protein is Ribonuclease HII.